The following is a 243-amino-acid chain: Anti-H(O) lectin 2 (243 aa).

N-linked (GlcNAc...) asparagine glycosylation is present at N115. Residues E127 and D129 each coordinate Mn(2+). Positions 129, 136, and 139 each coordinate Ca(2+). The Mn(2+) site is built by D139 and H144.

It belongs to the leguminous lectin family. Homodimer.

In terms of biological role, lactose- or galactose-binding anti-H(O) lectin. This Cytisophyllum sessilifolium (Sessile-leaved cytisus) protein is Anti-H(O) lectin 2.